A 362-amino-acid polypeptide reads, in one-letter code: Ferredoxin--NADP reductase, leaf isozyme 1, chloroplastic (362 aa).

A chloroplast-targeting transit peptide spans 1–62; that stretch reads MAAVTAAAVS…DAAAVAAAPA (62 aa). Positions 83-205 constitute an FAD-binding FR-type domain; sequence KEPYVGKCLL…TGPVGKEMLM (123 aa). Residues 141–144, 162–164, Tyr-168, 179–181, and Thr-220 each bind FAD; these read RLYS, CVK, and VCS. Residues Ser-144 and Lys-164 each contribute to the NADP(+) site. Cys-180 and Cys-185 form a disulfide bridge. Position 181 is a phosphoserine (Ser-181). NADP(+)-binding positions include Thr-220, 252 to 253, 282 to 283, Lys-292, 321 to 322, and Glu-360; these read VP, SR, and GL.

This sequence belongs to the ferredoxin--NADP reductase type 1 family. In terms of assembly, component of high molecular weight thylakoid LFNRs-containing protein complexes containing LIR1, LFNR1, LFNR2, TIC62 and TROL proteins. Interacts directly with LIR1 and TIC62; LIR1 increases the affinity of LFNR1 and LFNR2 for TIC62. FAD is required as a cofactor. In terms of processing, may form interchain disulfide bonds with LIR1.

It is found in the plastid. Its subcellular location is the chloroplast stroma. It localises to the chloroplast thylakoid membrane. It catalyses the reaction 2 reduced [2Fe-2S]-[ferredoxin] + NADP(+) + H(+) = 2 oxidized [2Fe-2S]-[ferredoxin] + NADPH. It participates in energy metabolism; photosynthesis. Functionally, may play a key role in regulating the relative amounts of cyclic and non-cyclic electron flow to meet the demands of the plant for ATP and reducing power. This is Ferredoxin--NADP reductase, leaf isozyme 1, chloroplastic from Oryza sativa subsp. japonica (Rice).